Here is a 495-residue protein sequence, read N- to C-terminus: UDP-glycosyltransferase 73C11 (495 aa).

The Proton acceptor role is filled by histidine 24. Residue histidine 24 coordinates an anthocyanidin. Residue aspartate 129 is the Charge relay of the active site. 6 residues coordinate UDP-alpha-D-glucose: glutamine 358, histidine 373, tryptophan 376, asparagine 377, serine 378, and glutamate 381. An anthocyanidin is bound at residue glycine 396. UDP-alpha-D-glucose contacts are provided by aspartate 397 and glutamine 398.

Belongs to the UDP-glycosyltransferase family.

The catalysed reaction is oleanolate + UDP-alpha-D-glucose = oleanolate 3-O-beta-D-glucoside + UDP + H(+). Catalyzes the transfer of a glucose (Glc) moiety from UDP-Glc to the C-3 position of the oleanane sapogenins oleanolate and hederagenin, and to the C-28 carboxylic group of the lupane sapogenin betulinate. The monoglucosylated hederagenin 3-O-beta-D-glucoside is a feeding deterrent of the yellow-striped flea beetle (Phyllotreta nemorum). This Barbarea vulgaris (Yellow rocket) protein is UDP-glycosyltransferase 73C11.